A 277-amino-acid chain; its full sequence is Small ribosomal subunit protein uS3 (277 aa).

One can recognise a KH type-2 domain in the interval 38-106 (IRRLLATGLE…QVQLNILEVK (69 aa)). The tract at residues 217 to 277 (AGVEAGRGAP…SAPSAETTES (61 aa)) is disordered. The segment covering 225–235 (APDRPRRERPA) has biased composition (basic and acidic residues). Residues 242-261 (SGSSGTTATSTEAGRAAAET) are compositionally biased toward low complexity.

This sequence belongs to the universal ribosomal protein uS3 family. Part of the 30S ribosomal subunit. Forms a tight complex with proteins S10 and S14.

Binds the lower part of the 30S subunit head. Binds mRNA in the 70S ribosome, positioning it for translation. The sequence is that of Small ribosomal subunit protein uS3 from Mycobacteroides abscessus (strain ATCC 19977 / DSM 44196 / CCUG 20993 / CIP 104536 / JCM 13569 / NCTC 13031 / TMC 1543 / L948) (Mycobacterium abscessus).